Reading from the N-terminus, the 141-residue chain is Hemoglobin subunit alpha-D (141 aa).

In terms of domain architecture, Globin spans 1–141 (MLTAEDKKLI…VAAVLAEKYR (141 aa)). 2 residues coordinate heme b: H58 and H87.

This sequence belongs to the globin family. Heterotetramer of two alpha-D chains and two beta chains. Red blood cells.

Involved in oxygen transport from the lung to the various peripheral tissues. This Apus apus (Common swift) protein is Hemoglobin subunit alpha-D (HBAD).